The primary structure comprises 140 residues: Profilin-2 (140 aa).

Position 2 is an N-acetylalanine (Ala2).

It belongs to the profilin family. Occurs in many kinds of cells as a complex with monomeric actin in a 1:1 ratio. Interacts with PFN2. Interacts with ACTMAP (via N-terminus); the interaction may facilitate efficient cleavage of the acetylated N-terminus of immature actin by ACTMAP.

It localises to the cytoplasm. The protein resides in the cytoskeleton. Binds to actin and affects the structure of the cytoskeleton. At high concentrations, profilin prevents the polymerization of actin, whereas it enhances it at low concentrations. By binding to PIP2, it inhibits the formation of IP3 and DG. The sequence is that of Profilin-2 (Pfn2) from Rattus norvegicus (Rat).